A 94-amino-acid polypeptide reads, in one-letter code: Late cornified envelope protein 3C (94 aa).

The segment covering 1 to 10 has biased composition (low complexity); that stretch reads MSCQQNQQQC. 2 disordered regions span residues 1-35 and 65-94; these read MSCQQNQQQCQPPPSCPSPKCPPKSPAQCLPPPSS and CRRQRSNSCDRGSGQQGGGSCRGHGSGGCC. Residues 11–34 are compositionally biased toward pro residues; the sequence is QPPPSCPSPKCPPKSPAQCLPPPS. Gly residues predominate over residues 78–94; that stretch reads GQQGGGSCRGHGSGGCC.

This sequence belongs to the LCE family. As to quaternary structure, interacts with CYSRT1; the interaction is direct. Skin-specific. Expression was readily detected in adult trunk skin, adult arm skin, fetal skin, penal skin, vulva, esophagus and tongue. Not expressed in the cervix, rectum, lung, colon, or placenta.

Its function is as follows. A structural component of the cornified envelope of the stratum corneum involved in innate cutaneous host defense. Possesses defensin-like antimicrobial activity against a broad spectrum of Gram-positive and Gram-negative bacteria, both aerobic and anaerobic species. Upon inflammation, may regulate skin barrier repair by shaping cutaneous microbiota composition and immune response to bacterial antigens. This chain is Late cornified envelope protein 3C, found in Homo sapiens (Human).